We begin with the raw amino-acid sequence, 402 residues long: Deoxyguanosinetriphosphate triphosphohydrolase-like protein (402 aa).

Positions 20-39 (PAFSRGRLVPEPESPTRTPF) are disordered. Positions 73–217 (RLTHTIEVAQ…AAIADDIAYN (145 aa)) constitute an HD domain.

The protein belongs to the dGTPase family. Type 2 subfamily.

In Brucella ovis (strain ATCC 25840 / 63/290 / NCTC 10512), this protein is Deoxyguanosinetriphosphate triphosphohydrolase-like protein.